The primary structure comprises 338 residues: Aspartate carbamoyltransferase catalytic subunit (338 aa).

2 residues coordinate carbamoyl phosphate: Arg-59 and Thr-60. Residue Lys-87 participates in L-aspartate binding. Carbamoyl phosphate is bound by residues Arg-109, His-142, and Gln-145. Residues Arg-182 and Arg-253 each contribute to the L-aspartate site. Positions 294 and 295 each coordinate carbamoyl phosphate.

It belongs to the aspartate/ornithine carbamoyltransferase superfamily. ATCase family. In terms of assembly, heterododecamer (2C3:3R2) of six catalytic PyrB chains organized as two trimers (C3), and six regulatory PyrI chains organized as three dimers (R2).

The catalysed reaction is carbamoyl phosphate + L-aspartate = N-carbamoyl-L-aspartate + phosphate + H(+). The protein operates within pyrimidine metabolism; UMP biosynthesis via de novo pathway; (S)-dihydroorotate from bicarbonate: step 2/3. Its function is as follows. Catalyzes the condensation of carbamoyl phosphate and aspartate to form carbamoyl aspartate and inorganic phosphate, the committed step in the de novo pyrimidine nucleotide biosynthesis pathway. The polypeptide is Aspartate carbamoyltransferase catalytic subunit (Prochlorococcus marinus (strain SARG / CCMP1375 / SS120)).